Consider the following 131-residue polypeptide: Large ribosomal subunit protein bL17 (131 aa).

Belongs to the bacterial ribosomal protein bL17 family. As to quaternary structure, part of the 50S ribosomal subunit. Contacts protein L32.

The chain is Large ribosomal subunit protein bL17 from Methylobacillus flagellatus (strain ATCC 51484 / DSM 6875 / VKM B-1610 / KT).